The following is a 417-amino-acid chain: Carbon catabolite repressor protein 4 homolog 4 (417 aa).

Phenylalanine 2 bears the N-acetylserine mark. Glutamate 143 provides a ligand contact to Mg(2+).

It belongs to the CCR4/nocturin family. As to quaternary structure, component of the CCR4-NOT complex, at least composed of CRR4 and CAF1 proteins. Forms homooligomers. Mg(2+) is required as a cofactor.

It localises to the nucleus. It is found in the cytoplasm. The enzyme catalyses Exonucleolytic cleavage of poly(A) to 5'-AMP.. Acts as a catalytic component of the CCR4-NOT core complex, which in the nucleus seems to be a general transcription factor, and in the cytoplasm the major mRNA deadenylase involved in mRNA turnover. Transcriptional regulator of circadian rhythms with poly(A)-degrading activity that affects the expression and rhythmicity of the clock core oscillator genes TOC1 and CCA1. Deadenylation may be a mechanism involved in the regulation of the circadian clock. May play a negative role in response against oxidative stress. Possesses magnesium-dependent poly(A)-specific exoribonuclease activity in vitro and is almost inactive with poly(U), poly(C) and poly(G) as substrates. This is Carbon catabolite repressor protein 4 homolog 4 from Arabidopsis thaliana (Mouse-ear cress).